A 38-amino-acid chain; its full sequence is Mu/omega-theraphotoxin-Mb1b (38 aa).

Intrachain disulfides connect Cys-7/Cys-21, Cys-14/Cys-26, and Cys-20/Cys-33. At Ser-38 the chain carries Serine amide.

This sequence belongs to the neurotoxin 10 (Hwtx-1) family. 28 (Jztx-11) subfamily. As to expression, expressed by the venom gland.

The protein localises to the secreted. Paralytic toxin on insects that inhibits voltage-gated sodium (Nav) and calcium (Cav) channels in P.americana (American cockroach) dorsal unpaired median (DUM) neurons, and also inhibits the B.germanica (German cockroach) Nav channel (BgNaV1). May act as a gating-modifier toxin on Nav and as a pore blocker on Cav. In vivo, reversibly paralyzes both L.cuprina (Australian sheep blowfly) and M.domestica (housefly), but does not affect larvae of H.armigera (cotton bollworms). This chain is Mu/omega-theraphotoxin-Mb1b, found in Monocentropus balfouri (Socotra Island blue baboon tarantula).